Consider the following 150-residue polypeptide: Protein Smg homolog (150 aa).

This sequence belongs to the Smg family.

In Methylibium petroleiphilum (strain ATCC BAA-1232 / LMG 22953 / PM1), this protein is Protein Smg homolog.